Consider the following 121-residue polypeptide: LOB domain-containing protein 23 (121 aa).

The region spanning Lys4–Ile105 is the LOB domain.

This sequence belongs to the LOB domain-containing protein family.

This Arabidopsis thaliana (Mouse-ear cress) protein is LOB domain-containing protein 23 (LBD23).